The chain runs to 185 residues: Ribonuclease M5 (185 aa).

Residues 3–84 (KEVIVVEGRD…KHARISQSEG (82 aa)) enclose the Toprim domain. Glu9, Asp55, and Asp57 together coordinate Mg(2+).

Belongs to the ribonuclease M5 family. The cofactor is Mg(2+).

It is found in the cytoplasm. It catalyses the reaction Endonucleolytic cleavage of RNA, removing 21 and 42 nucleotides, respectively, from the 5'- and 3'-termini of a 5S-rRNA precursor.. Required for correct processing of both the 5' and 3' ends of 5S rRNA precursor. Cleaves both sides of a double-stranded region yielding mature 5S rRNA in one step. The protein is Ribonuclease M5 of Clostridium acetobutylicum (strain ATCC 824 / DSM 792 / JCM 1419 / IAM 19013 / LMG 5710 / NBRC 13948 / NRRL B-527 / VKM B-1787 / 2291 / W).